The following is a 577-amino-acid chain: F-box-like/WD repeat-containing protein TBL1X (577 aa).

Residues 55–87 (TSDEVNFLVYRYLQESGFSHSAFTFGIESHISQ) enclose the LisH domain. In terms of domain architecture, F-box-like spans 92–137 (GTLVPPAALISILQKGLQYVEAEISINEDGTVFDGRPIESLSLIDA). Residue lysine 153 is modified to N6-acetyllysine. The tract at residues 177-202 (TTSAGVSHQNPSKNREATVNGEENRA) is disordered. Phosphoserine is present on serine 183. 8 WD repeats span residues 230–269 (GHES…NGGS), 286–325 (PSNK…ASTL), 327–366 (QHKG…AKQQ), 369–409 (FHSA…KTFQ), 410–449 (GHTN…CIHD), 452–500 (AHNK…CTHT), 503–542 (KHQE…LVHS), and 544–576 (RGTG…LDLR). Residue lysine 340 forms a Glycyl lysine isopeptide (Lys-Gly) (interchain with G-Cter in SUMO2) linkage.

The protein belongs to the WD repeat EBI family. In terms of assembly, homotetramer; dimer of dimers. Component of the N-Cor repressor complex, at least composed of NCOR1, NCOR2, HDAC3, TBL1X, TBL1R, CORO2A and GPS2. Interacts with GPS2 (when sumoylated); leading to protect GPS2 against degradation by the proteasome. Component of a E3 ubiquitin ligase complex containing UBE2D1, SIAH1, CACYBP/SIP, SKP1, APC and TBL1X. Probably part of other corepressor complexes, that do not contain NCOR1 and NCOR2. Interacts with histones H2B, H3a and H4. Interacts with MECP2; recruits TBL1X to the heterochromatin foci. Interacts with USP44. As to expression, ubiquitous.

It is found in the nucleus. Functionally, F-box-like protein involved in the recruitment of the ubiquitin/19S proteasome complex to nuclear receptor-regulated transcription units. Plays an essential role in transcription activation mediated by nuclear receptors. Probably acts as integral component of corepressor complexes that mediates the recruitment of the 19S proteasome complex, leading to the subsequent proteasomal degradation of transcription repressor complexes, thereby allowing cofactor exchange. This is F-box-like/WD repeat-containing protein TBL1X (TBL1X) from Homo sapiens (Human).